Consider the following 38-residue polypeptide: Large ribosomal subunit protein bL36 (38 aa).

Belongs to the bacterial ribosomal protein bL36 family.

This is Large ribosomal subunit protein bL36 from Buchnera aphidicola subsp. Schizaphis graminum (strain Sg).